We begin with the raw amino-acid sequence, 827 residues long: Polyhomeotic-like protein 2 (827 aa).

3 disordered regions span residues 1–78 (MEKE…QYLQ), 282–316 (GLGA…SDLT), and 482–545 (QEPT…PPQA). Residues 9–38 (SVASSASVTIPSTTSVSTSTSAGTLSNSSS) are compositionally biased toward low complexity. Residues 485 to 498 (TRTELRQSDKESQV) show a composition bias toward basic and acidic residues. A compositionally biased stretch (polar residues) spans 517 to 538 (AMTSGSGNNAPTVTGSAPQNGE). Residues 540-570 (KPPPQAVVKPQILTHVIEGFVIQEGAEPFPV) carry the HD1 motif. The segment at 609–643 (NNQPEPVRTCEFCGNVDFAFNFKRSKRFCSTVCAK) adopts an FCS-type zinc-finger fold. Cys618, Cys621, Cys637, and Cys641 together coordinate Zn(2+). A disordered region spans residues 653-730 (MGLFPGKSSP…EPISPLSNSS (78 aa)). A compositionally biased stretch (basic and acidic residues) spans 661-675 (SPEDTKKPKASDESP). Composition is skewed to polar residues over residues 687–696 (PSIQTTTGAS) and 708–717 (GESSQCSDMS). In terms of domain architecture, SAM spans 763-827 (WNVEDVYEFI…FARISMLKDS (65 aa)).

In terms of assembly, component of a PRC1-like complex. As to expression, isoform 1 expression is stronger at the posterior border than in the anterior region within individual somites; On the contrary, isoform 2 expression is higher at the posterior border.

The protein resides in the nucleus. Component of a Polycomb group (PcG) multiprotein PRC1-like complex, a complex class required to maintain the transcriptionally repressive state of many genes, including Hox genes, throughout development. PcG PRC1 complex acts via chromatin remodeling and modification of histones; it mediates monoubiquitination of histone H2A 'Lys-119', rendering chromatin heritably changed in its expressibility. This chain is Polyhomeotic-like protein 2 (phc2), found in Danio rerio (Zebrafish).